We begin with the raw amino-acid sequence, 151 residues long: MARIKYTTELDAETSAKAMGSELHISPKKSRELCKAIKGMRTNAARQYLEDVVILKQAVPFGRHNDSLGHRKGPMAAGRYPVKVASEMLKLLKNAESNAEYKGLNPEHMFIAHTAMNRGRVIHGMRPRARGRASPENTETVNLEMIISEVR.

This sequence belongs to the universal ribosomal protein uL22 family. In terms of assembly, part of the 50S ribosomal subunit.

Its function is as follows. This protein binds specifically to 23S rRNA. It makes multiple contacts with different domains of the 23S rRNA in the assembled 50S subunit and ribosome. In terms of biological role, the globular domain of the protein is located near the polypeptide exit tunnel on the outside of the subunit, while an extended beta-hairpin is found that lines the wall of the exit tunnel in the center of the 70S ribosome. This Methanococcoides burtonii (strain DSM 6242 / NBRC 107633 / OCM 468 / ACE-M) protein is Large ribosomal subunit protein uL22.